Consider the following 454-residue polypeptide: MRGHYHFIGIGGIGMSGLARILLQQNLSVSGSDIAFNYTIEGLIKSGATIYKGHSPSYITSGSTVIYSSDIKTDNPEYLAAKNLQCSLLHRAELLALLTRQKKSLAVTGTHGKTTTSSLLATTLLEANCDSSFAVGGIIPQFQSNAKHGLGDLFVFEADESDRSFLKYFPYGAIVTNIDNDHLNSYENSEDVLIQSFQQFTSQISSPNHLFWCGDDTHLKFLNGIGQSYGFGEHCNWRISNVFQKDFNLEFDLEGNEKKYPSIKLNLIGRHNLLNGAAVFGLAMSLNISEASIRHTFERFCGVLRRCEYKGEFENTIFLDDYAHHPTEIQTTLEGIRKAIKSKRLIAVFQPHRFSRIKDCLGMYGKIFNNADEVFVTDVYGAGETPIEGISQQQIIQEISENSSVPVKYVPRTALGHKLSEFIQPLDVIVTLGAGDVTKVASETLSLLENGKRF.

109 to 115 (GTHGKTT) is a binding site for ATP.

This sequence belongs to the MurCDEF family.

It localises to the cytoplasm. The enzyme catalyses UDP-N-acetyl-alpha-D-muramate + L-alanine + ATP = UDP-N-acetyl-alpha-D-muramoyl-L-alanine + ADP + phosphate + H(+). The protein operates within cell wall biogenesis; peptidoglycan biosynthesis. In terms of biological role, cell wall formation. The sequence is that of UDP-N-acetylmuramate--L-alanine ligase from Protochlamydia amoebophila (strain UWE25).